Reading from the N-terminus, the 339-residue chain is Immunoglobulin-binding protein 1 (339 aa).

Position 2 is an N-acetylalanine (Ala-2). The region spanning 46–60 (LDLLEKAAEMLSQLD) is the UIM domain. Residues 98–202 (RLDHLQRARE…YLLHLQRWID (105 aa)) form an interaction with PPP2CA region. Disordered regions lie at residues 221-243 (RDSS…VKPF) and 289-339 (APEE…QNMG). An interaction with MID1 region spans residues 225–290 (REASTSNSSR…PDQGIAKAAP (66 aa)). N6-acetyllysine is present on Lys-241. Acidic residues predominate over residues 301–312 (EEQEEKEEEDDE). Positions 313–329 (QTLHRAREWDDWKDTHP) are enriched in basic and acidic residues.

This sequence belongs to the IGBP1/TAP42 family. As to quaternary structure, interacts with partially folded PPP2CA, but not with the fully active protein. Interacts with PPP2CB, and with PP4 and PP6. Interacts with MID1 and MID2. Interacts with ubiquitin. Post-translationally, phosphorylated. In terms of processing, monoubiquitination by MID1 triggers calpain-mediated cleavage and switches IGBP1 activity from protective to destructive. In terms of tissue distribution, ubiquitously expressed with highest levels in heart, skeletal muscle and pancreas.

It localises to the cytoplasm. In terms of biological role, associated to surface IgM-receptor; may be involved in signal transduction. Involved in regulation of the catalytic activity of the phosphatases PP2A, PP4 and PP6 by protecting their partially folded catalytic subunits from degradative polyubiquitination until they associate with regulatory subunits. The sequence is that of Immunoglobulin-binding protein 1 (IGBP1) from Homo sapiens (Human).